The chain runs to 135 residues: uncharacterized protein (135 aa).

4 helical membrane passes run 4–24 (IIIC…WIFG), 26–46 (WDMP…TGVI), 68–88 (LILV…NGAW), and 93–113 (LIAY…CAAL).

Belongs to the bacteriophage holin family. Cp-1 holin subfamily.

It localises to the cell membrane. This is an uncharacterized protein from Clostridium perfringens (strain 13 / Type A).